The primary structure comprises 75 residues: Brevinin-2SN2 (75 aa).

An N-terminal signal peptide occupies residues 1–22 (MFTMKKSLLFLFFLGTISLSFC). A propeptide spans 23–40 (EEERGADEDDGGEMTEEE) (removed in mature form). A disulfide bridge connects residues C69 and C75.

Belongs to the frog skin active peptide (FSAP) family. Brevinin subfamily. Expressed by the skin glands.

Its subcellular location is the secreted. In terms of biological role, antimicrobial peptide. Active against some Gram-negative and a variety of Gram-positive bacterial strains. Active against fungus C.glabrata 090902 but not against C.albicans ATCC 10231. Shows hemolytic activity against human erythrocytes. This chain is Brevinin-2SN2, found in Sylvirana spinulosa (Fine-spined frog).